Here is a 306-residue protein sequence, read N- to C-terminus: Lipoyl synthase (306 aa).

The [4Fe-4S] cluster site is built by C55, C60, C66, C81, C85, C88, and S294. One can recognise a Radical SAM core domain in the interval 67–283 (WNHRTATFLL…RSYALARGFT (217 aa)).

This sequence belongs to the radical SAM superfamily. Lipoyl synthase family. The cofactor is [4Fe-4S] cluster.

The protein localises to the cytoplasm. The enzyme catalyses [[Fe-S] cluster scaffold protein carrying a second [4Fe-4S](2+) cluster] + N(6)-octanoyl-L-lysyl-[protein] + 2 oxidized [2Fe-2S]-[ferredoxin] + 2 S-adenosyl-L-methionine + 4 H(+) = [[Fe-S] cluster scaffold protein] + N(6)-[(R)-dihydrolipoyl]-L-lysyl-[protein] + 4 Fe(3+) + 2 hydrogen sulfide + 2 5'-deoxyadenosine + 2 L-methionine + 2 reduced [2Fe-2S]-[ferredoxin]. The protein operates within protein modification; protein lipoylation via endogenous pathway; protein N(6)-(lipoyl)lysine from octanoyl-[acyl-carrier-protein]: step 2/2. Functionally, catalyzes the radical-mediated insertion of two sulfur atoms into the C-6 and C-8 positions of the octanoyl moiety bound to the lipoyl domains of lipoate-dependent enzymes, thereby converting the octanoylated domains into lipoylated derivatives. This is Lipoyl synthase from Chloroflexus aurantiacus (strain ATCC 29364 / DSM 637 / Y-400-fl).